A 295-amino-acid polypeptide reads, in one-letter code: 2S seed storage protein (295 aa).

The first 20 residues, 1–20 (MAKQIVLALAFAALVAFATA), serve as a signal peptide directing secretion. A propeptide spanning residues 21–161 (HTTIITTTIE…TITTTVTESN (141 aa)) is cleaved from the precursor. Polar residues predominate over residues 195–208 (EQQMQQSPRSTRPY). The segment at 195-215 (EQQMQQSPRSTRPYQQRPGQQ) is disordered.

The protein belongs to the 2S seed storage albumins family. The 38 kDa precursor may be cleaved into two polypeptides of approximately the same size. The mature protein is composed of a single polypeptide containing one or more intra-molecular disulfide linkages.

Its function is as follows. This is a 2S seed storage protein. This Helianthus annuus (Common sunflower) protein is 2S seed storage protein (HAG5).